We begin with the raw amino-acid sequence, 222 residues long: N-(5'-phosphoribosyl)anthranilate isomerase (222 aa).

This sequence belongs to the TrpF family.

It carries out the reaction N-(5-phospho-beta-D-ribosyl)anthranilate = 1-(2-carboxyphenylamino)-1-deoxy-D-ribulose 5-phosphate. Its pathway is amino-acid biosynthesis; L-tryptophan biosynthesis; L-tryptophan from chorismate: step 3/5. In Xanthomonas oryzae pv. oryzae (strain PXO99A), this protein is N-(5'-phosphoribosyl)anthranilate isomerase.